A 443-amino-acid chain; its full sequence is 3-phosphoshikimate 1-carboxyvinyltransferase (443 aa).

Residues 1–22 form a disordered region; sequence MSHASRPTPLEARGSTPLTGRV. Residues K28, S29, and R33 each coordinate 3-phosphoshikimate. Residue K28 participates in phosphoenolpyruvate binding. Residues G101 and R129 each coordinate phosphoenolpyruvate. S174, Q176, D326, and K353 together coordinate 3-phosphoshikimate. Position 176 (Q176) interacts with phosphoenolpyruvate. The active-site Proton acceptor is the D326. The phosphoenolpyruvate site is built by R357 and R400.

This sequence belongs to the EPSP synthase family. In terms of assembly, monomer.

The protein resides in the cytoplasm. It catalyses the reaction 3-phosphoshikimate + phosphoenolpyruvate = 5-O-(1-carboxyvinyl)-3-phosphoshikimate + phosphate. The protein operates within metabolic intermediate biosynthesis; chorismate biosynthesis; chorismate from D-erythrose 4-phosphate and phosphoenolpyruvate: step 6/7. Its function is as follows. Catalyzes the transfer of the enolpyruvyl moiety of phosphoenolpyruvate (PEP) to the 5-hydroxyl of shikimate-3-phosphate (S3P) to produce enolpyruvyl shikimate-3-phosphate and inorganic phosphate. This is 3-phosphoshikimate 1-carboxyvinyltransferase from Afipia carboxidovorans (strain ATCC 49405 / DSM 1227 / KCTC 32145 / OM5) (Oligotropha carboxidovorans).